We begin with the raw amino-acid sequence, 638 residues long: Threonine--tRNA ligase (638 aa).

The 61-residue stretch at 1–61 (MPIITLPDGT…DYDAEIKIIT (61 aa)) folds into the TGS domain. A catalytic region spans residues 242 to 533 (DHRKIGKKMD…LIENYAGNFP (292 aa)). 3 residues coordinate Zn(2+): C333, H384, and H510.

The protein belongs to the class-II aminoacyl-tRNA synthetase family. As to quaternary structure, homodimer. Zn(2+) is required as a cofactor.

Its subcellular location is the cytoplasm. It carries out the reaction tRNA(Thr) + L-threonine + ATP = L-threonyl-tRNA(Thr) + AMP + diphosphate + H(+). Functionally, catalyzes the attachment of threonine to tRNA(Thr) in a two-step reaction: L-threonine is first activated by ATP to form Thr-AMP and then transferred to the acceptor end of tRNA(Thr). Also edits incorrectly charged L-seryl-tRNA(Thr). The protein is Threonine--tRNA ligase of Prochlorococcus marinus (strain MIT 9211).